A 213-amino-acid chain; its full sequence is ATP synthase peripheral stalk subunit OSCP, mitochondrial (213 aa).

Residues 1–23 (MASQAVSGLSRQVRCFSTSVVRP) constitute a mitochondrion transit peptide. The SIFI-degron signature appears at 5–23 (AVSGLSRQVRCFSTSVVRP). 4 positions are modified to N6-acetyllysine: Lys-54, Lys-60, Lys-70, and Lys-73. Lys-90 bears the N6-succinyllysine mark. Lys-100, Lys-158, and Lys-162 each carry N6-acetyllysine; alternate. Residues Lys-100, Lys-158, and Lys-162 each carry the N6-succinyllysine; alternate modification. N6-acetyllysine is present on residues Lys-172, Lys-176, and Lys-192. Position 199 is an N6-succinyllysine (Lys-199).

This sequence belongs to the ATPase delta chain family. As to quaternary structure, component of the ATP synthase complex composed at least of ATP5F1A/subunit alpha, ATP5F1B/subunit beta, ATP5MC1/subunit c (homooctomer), MT-ATP6/subunit a, MT-ATP8/subunit 8, ATP5ME/subunit e, ATP5MF/subunit f, ATP5MG/subunit g, ATP5MK/subunit k, ATP5MJ/subunit j, ATP5F1C/subunit gamma, ATP5F1D/subunit delta, ATP5F1E/subunit epsilon, ATP5PF/subunit F6, ATP5PB/subunit b, ATP5PD/subunit d, ATP5PO/subunit OSCP. ATP synthase complex consists of a soluble F(1) head domain (subunits alpha(3) and beta(3)) - the catalytic core - and a membrane F(0) domain - the membrane proton channel (subunits c, a, 8, e, f, g, k and j). These two domains are linked by a central stalk (subunits gamma, delta, and epsilon) rotating inside the F1 region and a stationary peripheral stalk (subunits F6, b, d, and OSCP). In terms of processing, acetylation at Lys-162 decreases ATP production. Deacetylated by SIRT3. Post-translationally, in response to mitochondrial stress, the precursor protein is ubiquitinated by the SIFI complex in the cytoplasm before mitochondrial import, leading to its degradation. Within the SIFI complex, UBR4 initiates ubiquitin chain that are further elongated or branched by KCMF1.

It is found in the mitochondrion. The protein resides in the mitochondrion inner membrane. Subunit OSCP, of the mitochondrial membrane ATP synthase complex (F(1)F(0) ATP synthase or Complex V) that produces ATP from ADP in the presence of a proton gradient across the membrane which is generated by electron transport complexes of the respiratory chain. ATP synthase complex consist of a soluble F(1) head domain - the catalytic core - and a membrane F(1) domain - the membrane proton channel. These two domains are linked by a central stalk rotating inside the F(1) region and a stationary peripheral stalk. During catalysis, ATP synthesis in the catalytic domain of F(1) is coupled via a rotary mechanism of the central stalk subunits to proton translocation. In vivo, can only synthesize ATP although its ATP hydrolase activity can be activated artificially in vitro. Part of the complex F(0) domain. Part of the complex F(0) domain and the peripheric stalk, which acts as a stator to hold the catalytic alpha(3)beta(3) subcomplex and subunit a/ATP6 static relative to the rotary elements. The sequence is that of ATP synthase peripheral stalk subunit OSCP, mitochondrial from Sus scrofa (Pig).